We begin with the raw amino-acid sequence, 199 residues long: MNSIVYTTKTQHAVMGLRASLALLFVCGVVYTGTVTQLGGALFPAQAKGSVIHRDNVAMGSEFIAQPFVNPAYFYSRPSAVDYDPMATGGSNLAPSNPALRERVMATSQEIQARESVQAADIPVDLLATSGAGLDPHISPAAAKLQVARVAQARQLAEPQVLTLVAQFIEPPQWGIFGQARVNVLKLNLALDQIAKHAQ.

Residues 21-43 form a helical membrane-spanning segment; it reads LALLFVCGVVYTGTVTQLGGALF.

It belongs to the KdpC family. The system is composed of three essential subunits: KdpA, KdpB and KdpC.

The protein resides in the cell inner membrane. In terms of biological role, part of the high-affinity ATP-driven potassium transport (or Kdp) system, which catalyzes the hydrolysis of ATP coupled with the electrogenic transport of potassium into the cytoplasm. This subunit acts as a catalytic chaperone that increases the ATP-binding affinity of the ATP-hydrolyzing subunit KdpB by the formation of a transient KdpB/KdpC/ATP ternary complex. The polypeptide is Potassium-transporting ATPase KdpC subunit (Shewanella putrefaciens (strain CN-32 / ATCC BAA-453)).